We begin with the raw amino-acid sequence, 693 residues long: Elongation factor G (693 aa).

Residues 8-282 (EKTRNIGIMA…AVIDYLPSPL (275 aa)) enclose the tr-type G domain. Residues 17–24 (AHVDAGKT), 81–85 (DTPGH), and 135–138 (NKMD) each bind GTP.

It belongs to the TRAFAC class translation factor GTPase superfamily. Classic translation factor GTPase family. EF-G/EF-2 subfamily.

It is found in the cytoplasm. In terms of biological role, catalyzes the GTP-dependent ribosomal translocation step during translation elongation. During this step, the ribosome changes from the pre-translocational (PRE) to the post-translocational (POST) state as the newly formed A-site-bound peptidyl-tRNA and P-site-bound deacylated tRNA move to the P and E sites, respectively. Catalyzes the coordinated movement of the two tRNA molecules, the mRNA and conformational changes in the ribosome. This chain is Elongation factor G, found in Streptococcus pneumoniae serotype 2 (strain D39 / NCTC 7466).